Here is a 438-residue protein sequence, read N- to C-terminus: Transposon Ty2-GR1 Gag polyprotein (438 aa).

3 stretches are compositionally biased toward polar residues: residues 1 to 11, 19 to 39, and 49 to 60; these read MESQQLHQNPH, ASVTSKEVPSNQDPLAVSASN, and KVNSQQETTPGT. Disordered stretches follow at residues 1–86, 360–403, and 418–438; these read MESQ…GQYQ, HSEY…ATSS, and VSSQYLSDDDELSLRPATERI. The RNA-binding stretch occupies residues 295–397; that stretch reads ENNINVSDRL…SSKPRAAKAH (103 aa). A compositionally biased stretch (low complexity) spans 369–381; that stretch reads TSPNTTNTKVTTR.

Homotrimer.

The protein localises to the cytoplasm. In terms of biological role, capsid protein (CA) is the structural component of the virus-like particle (VLP), forming the shell that encapsulates the retrotransposons dimeric RNA genome. The particles are assembled from trimer-clustered units and there are holes in the capsid shells that allow for the diffusion of macromolecules. CA also has nucleocapsid-like chaperone activity, promoting primer tRNA(i)-Met annealing to the multipartite primer-binding site (PBS), dimerization of Ty2 RNA and initiation of reverse transcription. This chain is Transposon Ty2-GR1 Gag polyprotein (TY2A-GR1), found in Saccharomyces cerevisiae (strain ATCC 204508 / S288c) (Baker's yeast).